Reading from the N-terminus, the 506-residue chain is D-alanine--D-alanyl carrier protein ligase (506 aa).

Residue 152-153 (TS) coordinates ATP. Position 197 (Asp-197) interacts with D-alanine. 292–297 (NTYGPT) is an ATP binding site. Val-301 contributes to the D-alanine binding site. ATP contacts are provided by residues Asp-383, 395–398 (YRGR), and Lys-494. Lys-494 is a D-alanine binding site.

This sequence belongs to the ATP-dependent AMP-binding enzyme family. DltA subfamily.

The protein resides in the cytoplasm. It carries out the reaction holo-[D-alanyl-carrier protein] + D-alanine + ATP = D-alanyl-[D-alanyl-carrier protein] + AMP + diphosphate. It functions in the pathway cell wall biogenesis; lipoteichoic acid biosynthesis. Its function is as follows. Catalyzes the first step in the D-alanylation of lipoteichoic acid (LTA), the activation of D-alanine and its transfer onto the D-alanyl carrier protein (Dcp) DltC. In an ATP-dependent two-step reaction, forms a high energy D-alanyl-AMP intermediate, followed by transfer of the D-alanyl residue as a thiol ester to the phosphopantheinyl prosthetic group of the Dcp. D-alanylation of LTA plays an important role in modulating the properties of the cell wall in Gram-positive bacteria, influencing the net charge of the cell wall. This chain is D-alanine--D-alanyl carrier protein ligase, found in Lacticaseibacillus rhamnosus (Lactobacillus rhamnosus).